The primary structure comprises 595 residues: Apolipoprotein N-acyltransferase 2 (595 aa).

A run of 5 helical transmembrane segments spans residues 30–50, 63–83, 95–115, 167–187, and 210–230; these read FLAFAPVSLTHFVWIAPFGFF, LFFHGLLIGVVFYAISFHWII, VVAILILLFAGLLFGLKFPIF, AEITGVYGISFLVFIVSYTLF, and FITLPALLLLTFIVSGIFLFK. The 315-residue stretch at 241–555 folds into the CN hydrolase domain; the sequence is LNVLIVQPDA…AEALSETIDV (315 aa). Glu293 serves as the catalytic Proton acceptor. Lys372 is an active-site residue. The active-site Nucleophile is Cys463. Residues 569–589 form a helical membrane-spanning segment; it reads LIPWLMLFLTGIYYLNLLIGI.

It belongs to the CN hydrolase family. Apolipoprotein N-acyltransferase subfamily.

The protein resides in the cell inner membrane. The catalysed reaction is N-terminal S-1,2-diacyl-sn-glyceryl-L-cysteinyl-[lipoprotein] + a glycerophospholipid = N-acyl-S-1,2-diacyl-sn-glyceryl-L-cysteinyl-[lipoprotein] + a 2-acyl-sn-glycero-3-phospholipid + H(+). The protein operates within protein modification; lipoprotein biosynthesis (N-acyl transfer). Catalyzes the phospholipid dependent N-acylation of the N-terminal cysteine of apolipoprotein, the last step in lipoprotein maturation. The chain is Apolipoprotein N-acyltransferase 2 from Leptospira interrogans serogroup Icterohaemorrhagiae serovar Lai (strain 56601).